Reading from the N-terminus, the 173-residue chain is Protein tyrosine phosphatase type IVA 3 (173 aa).

Residues 8–161 (APVEVSYKHM…YRPKQRLRFK (154 aa)) form the Tyrosine-protein phosphatase domain. An intrachain disulfide couples Cys49 to Cys104. Residue Asp72 is the Proton donor of the active site. Cys104 (phosphocysteine intermediate) is an active-site residue. Arg110 contributes to the substrate binding site. Cys170 bears the Cysteine methyl ester mark. Cys170 is lipidated: S-farnesyl cysteine. Residues 171–173 (CVM) constitute a propeptide, removed in mature form.

The protein belongs to the protein-tyrosine phosphatase family. In terms of assembly, interacts with tubulin. Farnesylated. Farnesylation is required for membrane targeting. Mainly expressed in cardiomyocytes and skeletal muscle; also found in pancreas. Consistently overexpressed in colon cancer metastasis.

The protein localises to the cell membrane. It is found in the early endosome. The enzyme catalyses O-phospho-L-tyrosyl-[protein] + H2O = L-tyrosyl-[protein] + phosphate. With respect to regulation, inhibited by sodium orthovanadate and peroxovanadium compounds, and by pentamidine. In terms of biological role, protein tyrosine phosphatase which stimulates progression from G1 into S phase during mitosis. Enhances cell proliferation, cell motility and invasive activity, and promotes cancer metastasis. May be involved in the progression of cardiac hypertrophy by inhibiting intracellular calcium mobilization in response to angiotensin II. In Homo sapiens (Human), this protein is Protein tyrosine phosphatase type IVA 3 (PTP4A3).